Here is a 573-residue protein sequence, read N- to C-terminus: ATP-dependent RNA helicase RhlB (573 aa).

The Q motif motif lies at 9-37 (LTFSSFDLHPALVAGLESAGFTRCTPIQA). In terms of domain architecture, Helicase ATP-binding spans 40-220 (LPVALPGGDV…YEHMNEPEKL (181 aa)). Position 53-60 (53-60 (AQTGTGKT)) interacts with ATP. Positions 166–169 (DEAD) match the DEAD box motif. A Helicase C-terminal domain is found at 231-393 (RVRQRIYFPS…PVTTELLTPL (163 aa)). Residues 391-400 (TPLPRTPRAT) are compositionally biased toward low complexity. The tract at residues 391-559 (TPLPRTPRAT…AKPSGSPSLL (169 aa)) is disordered. The segment covering 402–411 (EGEEVDDDAG) has biased composition (acidic residues). Over residues 419-432 (REAREQRAADEARR) the composition is skewed to basic and acidic residues. Positions 435-449 (GRSGPGGASRSGSGG) are enriched in gly residues. Basic and acidic residues predominate over residues 450–461 (GRRDGAGADGKP). The segment covering 476–499 (PAAAPSETPVVVAAAAETPAVTAA) has biased composition (low complexity). Residues 505-514 (PRKRRRRRNG) are compositionally biased toward basic residues. Composition is skewed to low complexity over residues 516–528 (PVEGAEPVVASTP) and 541–559 (VVAKPVRAAAKPSGSPSLL).

It belongs to the DEAD box helicase family. RhlB subfamily. In terms of assembly, component of the RNA degradosome, which is a multiprotein complex involved in RNA processing and mRNA degradation.

The protein localises to the cytoplasm. It carries out the reaction ATP + H2O = ADP + phosphate + H(+). DEAD-box RNA helicase involved in RNA degradation. Has RNA-dependent ATPase activity and unwinds double-stranded RNA. This Xanthomonas campestris pv. campestris (strain B100) protein is ATP-dependent RNA helicase RhlB.